Consider the following 425-residue polypeptide: MSTIEAIYLVDTNGALLLQLESRGRTSPITLEHIKNELFRYKLRNEEPPFILHNKNFLIFQELEEDVRLCIPTTCDTEPLYIHDIMRRIVDVVKTFFGGFNASKVEKNVCVIVQLLAEMIDYGYATCMEPNALQDIVPLPSFMNKFMAVTGLQTNTPTLARDTVPWRTAKAKYATNEFFIHVLERVSAVYQPNGKLAFGTVKSDMECKCQISGMPLLLLSLRPGTKLGNVRFHQSVNLKRWKQHPDQIEFIPPDGKFTLASFQTDFATQKSLPVVVEAKNKLDGRFEVRIRNTGKKSVENLKILITIPQALKSVTVTEGNYIFRASKYTHMEEGILEWSVKKLAWTSPALVLTGFLAPLKKDANSTEESSSYSKLEHLDLQYKLQGSTLHNFKVESLKMLNHPDKKSYKGVKHTIIAQNVSFRFR.

In terms of domain architecture, MHD spans 175-423 (TNEFFIHVLE…TIIAQNVSFR (249 aa)).

Belongs to the adaptor complexes medium subunit family.

The protein localises to the cytoplasm. Its subcellular location is the cytoskeleton. The protein resides in the microtubule organizing center. It localises to the spindle pole body. It is found in the membrane. The protein localises to the golgi apparatus. Its subcellular location is the cytoplasmic vesicle membrane. Functionally, part of the AP-3 complex, an adaptor-related complex which is not clathrin-associated. The complex is associated with the Golgi region as well as more peripheral structures. It facilitates the budding of vesicles from the Golgi membrane and may be directly involved in trafficking to the vacuole. The sequence is that of AP-3 complex subunit mu (apm3) from Schizosaccharomyces pombe (strain 972 / ATCC 24843) (Fission yeast).